The chain runs to 359 residues: 3-dehydroquinate synthase (359 aa).

Residues 70–75, 104–108, 128–129, lysine 141, and lysine 150 each bind NAD(+); these read DAEGGK, GAATD, and TT. Residues glutamate 183, histidine 246, and histidine 262 each coordinate Zn(2+).

This sequence belongs to the sugar phosphate cyclases superfamily. Dehydroquinate synthase family. Co(2+) is required as a cofactor. Requires Zn(2+) as cofactor. It depends on NAD(+) as a cofactor.

The protein resides in the cytoplasm. It carries out the reaction 7-phospho-2-dehydro-3-deoxy-D-arabino-heptonate = 3-dehydroquinate + phosphate. It participates in metabolic intermediate biosynthesis; chorismate biosynthesis; chorismate from D-erythrose 4-phosphate and phosphoenolpyruvate: step 2/7. Its function is as follows. Catalyzes the conversion of 3-deoxy-D-arabino-heptulosonate 7-phosphate (DAHP) to dehydroquinate (DHQ). The polypeptide is 3-dehydroquinate synthase (Mycolicibacterium gilvum (strain PYR-GCK) (Mycobacterium gilvum (strain PYR-GCK))).